The following is a 162-amino-acid chain: 2-amino-4-hydroxy-6-hydroxymethyldihydropteridine pyrophosphokinase (162 aa).

This sequence belongs to the HPPK family.

The catalysed reaction is 6-hydroxymethyl-7,8-dihydropterin + ATP = (7,8-dihydropterin-6-yl)methyl diphosphate + AMP + H(+). It functions in the pathway cofactor biosynthesis; tetrahydrofolate biosynthesis; 2-amino-4-hydroxy-6-hydroxymethyl-7,8-dihydropteridine diphosphate from 7,8-dihydroneopterin triphosphate: step 4/4. Catalyzes the transfer of pyrophosphate from adenosine triphosphate (ATP) to 6-hydroxymethyl-7,8-dihydropterin, an enzymatic step in folate biosynthesis pathway. The polypeptide is 2-amino-4-hydroxy-6-hydroxymethyldihydropteridine pyrophosphokinase (folK) (Pseudomonas aeruginosa (strain ATCC 15692 / DSM 22644 / CIP 104116 / JCM 14847 / LMG 12228 / 1C / PRS 101 / PAO1)).